Reading from the N-terminus, the 185-residue chain is Large ribosomal subunit protein uL13 (185 aa).

The protein belongs to the universal ribosomal protein uL13 family. As to quaternary structure, part of the 50S ribosomal subunit.

In terms of biological role, this protein is one of the early assembly proteins of the 50S ribosomal subunit, although it is not seen to bind rRNA by itself. It is important during the early stages of 50S assembly. This chain is Large ribosomal subunit protein uL13, found in Pyrobaculum islandicum (strain DSM 4184 / JCM 9189 / GEO3).